A 119-amino-acid polypeptide reads, in one-letter code: Beta-2-microglobulin (119 aa).

Residues 1–21 (MGKAAAVVLVTLVALLGLAQA) form the signal peptide. An Ig-like C1-type domain is found at 25 to 113 (PKVQVYSRFP…HETLKEPQVY (89 aa)). Residues C45 and C100 are joined by a disulfide bond.

This sequence belongs to the beta-2-microglobulin family. In terms of assembly, heterodimer of an alpha chain and a beta chain. Beta-2-microglobulin is the beta-chain of major histocompatibility complex class I molecules.

It is found in the secreted. Functionally, component of the class I major histocompatibility complex (MHC). Involved in the presentation of peptide antigens to the immune system. This chain is Beta-2-microglobulin (B2M), found in Gallus gallus (Chicken).